A 351-amino-acid chain; its full sequence is Transcription factor Atoh1 (351 aa).

2 disordered regions span residues 16 to 39 (LGDH…PATL) and 89 to 116 (EAAA…SKSP). Positions 26 to 36 (HHVPPLTPQPP) are enriched in pro residues. The bHLH domain maps to 156-208 (QRRLAANARERRRMHGLNHAFDQLRNVIPSFNNDKKLSKYETLQMAQIYINAL). Disordered stretches follow at residues 244–278 (GAGA…GPAS) and 308–351 (LSPS…DEAS). Residues 247–256 (ASAVAGAQPA) are compositionally biased toward low complexity. The segment covering 258-268 (GGGPRPTPPGP) has biased composition (pro residues). The span at 332-351 (HRSDGEFSPHSHYSDSDEAS) shows a compositional bias: basic and acidic residues.

In terms of assembly, efficient DNA binding requires dimerization with another bHLH protein. Developing nervous system, and in adult epithelial cells of the gastrointestinal tract.

Its subcellular location is the nucleus. Transcriptional regulator. Activates E box-dependent transcription in collaboration with TCF3/E47, but the activity is completely antagonized by the negative regulator of neurogenesis HES1. Plays a role in the differentiation of subsets of neural cells by activating E box-dependent transcription. This chain is Transcription factor Atoh1, found in Mus musculus (Mouse).